The primary structure comprises 307 residues: MMWRRWLALALVAVAWVHAEEQVRSKSKICANVFCGAGRECAVTEKGEPTCLCIEQCKPHKRPVCGSNGKTYLNHCELHRDACLTGSKIQVDYDGHCKEKKSVSPSASPVVCYQSNRDELRRRIIQWLEAEIIPDGWFSKGSNYSEILDKYFKNFDNGDSRLDSSEFLKFVEQNETAINITTYADQENNKLLRGLCVDALIELSDENADWKLSFQEFLKCLNPSFNPPEKKCALEDETYADGAETEVDCNRCVCACGNWVCTAMTCDGKNQKGAQTQAEEEMTRYVQELQKHQETAEKSKRVSTKEI.

An N-terminal signal peptide occupies residues 1–19 (MMWRRWLALALVAVAWVHA). Positions 29–52 (ICANVFCGAGRECAVTEKGEPTCL) constitute a Follistatin-like domain. Disulfide bonds link Cys30/Cys41, Cys35/Cys51, Cys53/Cys83, Cys57/Cys76, and Cys65/Cys97. In terms of domain architecture, Kazal-like spans 47 to 99 (GEPTCLCIEQCKPHKRPVCGSNGKTYLNHCELHRDACLTGSKIQVDYDGHCKE). N-linked (GlcNAc...) asparagine glycosylation occurs at Asn143. The region spanning 143–177 (NYSEILDKYFKNFDNGDSRLDSSEFLKFVEQNETA) is the EF-hand 1 domain. Ser164 carries the post-translational modification Phosphoserine. 2 N-linked (GlcNAc...) asparagine glycosylation sites follow: Asn174 and Asn179. The 36-residue stretch at 192–227 (LRGLCVDALIELSDENADWKLSFQEFLKCLNPSFNP) folds into the EF-hand 2 domain. The VWFC domain occupies 232 to 286 (CALEDETYADGAETEVDCNRCVCACGNWVCTAMTCDGKNQKGAQTQAEEEMTRYV).

As to quaternary structure, homodimer. Interacts with SCN10A. Interacts with DIP2A; DIP2A may act as a cell surface receptor for FSTL1. Interacts with BMP4. Interacts with CD14; this interaction promotes TL4-mediated signaling cascade.

Its subcellular location is the secreted. Its function is as follows. Secreted glycoprotein that is involved in various physiological processes, such as angiogenesis, regulation of the immune response, cell proliferation and differentiation. Plays a role in the development of the central nervous system, skeletal system, lungs, and ureter. Promotes endothelial cell survival, migration and differentiation into network structures in an AKT-dependent manner. Also promotes survival of cardiac myocytes. Initiates various signaling cascades by activating different receptors on the cell surface such as DIP2A, TLR4 or BMP receptors. This is Follistatin-related protein 1 (FSTL1) from Bos taurus (Bovine).